Here is a 98-residue protein sequence, read N- to C-terminus: Large ribosomal subunit protein uL23 (98 aa).

The protein belongs to the universal ribosomal protein uL23 family. As to quaternary structure, part of the 50S ribosomal subunit. Contacts protein L29, and trigger factor when it is bound to the ribosome.

In terms of biological role, one of the early assembly proteins it binds 23S rRNA. One of the proteins that surrounds the polypeptide exit tunnel on the outside of the ribosome. Forms the main docking site for trigger factor binding to the ribosome. The sequence is that of Large ribosomal subunit protein uL23 from Ruegeria pomeroyi (strain ATCC 700808 / DSM 15171 / DSS-3) (Silicibacter pomeroyi).